A 503-amino-acid polypeptide reads, in one-letter code: MDLVPSFSLETWVLLALSLVLLYRYATYSHGFFKKLGIPGPKPLPLFGNVLSYRKGMWSFDIECRKKYGNMWGLYDGPQPVLAITEPDMIKAVLVKECYSVFTNRRSLVPVGFMKKAVSLSEDEEWKRIRTQLSPNFTSGKLKEMFPIIKQYGDVLVKNLRQEAEKGKPVQLKEIFGAYSMDIIVATAFGVNVDSLNNPHDPFVSKARKLFRFDFLSPFLLSIVMFPFLTQLYEMLSISIFPRDSLKFFTKFVKKTKENHLESNKKQRVDFLQMMLNSQNFKDTESHKALSDVEILAQSIIFIFAGYETTSSTLSFIMYSLATHPDVQKKLQQEIDKTLPNKAFPTYDVMMEMEYLDMVVNETLRLYPVTNRIERMSKKDFEINGMSFPKGTGVMIPSFALHRDSKYWPEPDEFRPERFSKKNKENIDPYIYMPFGNGPRNCIGMRMALMNLKLALIRLLQNFSFYPCKETQIPLRLGSEALLQPAKPIILKVVSRDETIRGA.

Cys-442 is a binding site for heme.

This sequence belongs to the cytochrome P450 family. Requires heme as cofactor.

The protein resides in the endoplasmic reticulum membrane. The protein localises to the microsome membrane. The enzyme catalyses an organic molecule + reduced [NADPH--hemoprotein reductase] + O2 = an alcohol + oxidized [NADPH--hemoprotein reductase] + H2O + H(+). Its function is as follows. Cytochromes P450 are a group of heme-thiolate monooxygenases. In liver microsomes, this enzyme is involved in an NADPH-dependent electron transport pathway. It oxidizes a variety of structurally unrelated compounds, including steroids, fatty acids, and xenobiotics. The sequence is that of Cytochrome P450 3A14 (CYP3A14) from Cavia porcellus (Guinea pig).